The primary structure comprises 230 residues: Small ribosomal subunit protein uS3 (230 aa).

Residues 39-107 (VREYLFKRLK…PVHINIEEVR (69 aa)) enclose the KH type-2 domain.

This sequence belongs to the universal ribosomal protein uS3 family. As to quaternary structure, part of the 30S ribosomal subunit. Forms a tight complex with proteins S10 and S14.

Binds the lower part of the 30S subunit head. Binds mRNA in the 70S ribosome, positioning it for translation. In Alcanivorax borkumensis (strain ATCC 700651 / DSM 11573 / NCIMB 13689 / SK2), this protein is Small ribosomal subunit protein uS3.